We begin with the raw amino-acid sequence, 463 residues long: Fumarate hydratase class II (463 aa).

Residues 98–100 (SGT), 129–132 (HPND), 139–141 (SSN), and T187 contribute to the substrate site. The Proton donor/acceptor role is filled by H188. Residue S318 is part of the active site. Substrate is bound by residues S319 and 324 to 326 (KVN).

The protein belongs to the class-II fumarase/aspartase family. Fumarase subfamily. As to quaternary structure, homotetramer.

The protein localises to the cytoplasm. The catalysed reaction is (S)-malate = fumarate + H2O. It participates in carbohydrate metabolism; tricarboxylic acid cycle; (S)-malate from fumarate: step 1/1. Functionally, involved in the TCA cycle. Catalyzes the stereospecific interconversion of fumarate to L-malate. In Caulobacter vibrioides (strain ATCC 19089 / CIP 103742 / CB 15) (Caulobacter crescentus), this protein is Fumarate hydratase class II.